The following is a 175-amino-acid chain: MNLKEKFRHVLNFPKEGIDFIDITTVLQDKDAFKYAIDSLVNLVKDLDFELIVGPESRGFIFGAPVAYVLNKGLVLVRKKGKLPYKTVSVEYELEYGKDVLEMHIDAIKPGQKVVIIDDLLATGGTTLSNIKLVEKLGGEVVGIAYLVELTYLGGRENLKGYDVRSVVQFESSLI.

Belongs to the purine/pyrimidine phosphoribosyltransferase family. Homodimer.

Its subcellular location is the cytoplasm. It carries out the reaction AMP + diphosphate = 5-phospho-alpha-D-ribose 1-diphosphate + adenine. It participates in purine metabolism; AMP biosynthesis via salvage pathway; AMP from adenine: step 1/1. Catalyzes a salvage reaction resulting in the formation of AMP, that is energically less costly than de novo synthesis. The chain is Adenine phosphoribosyltransferase from Caldicellulosiruptor bescii (strain ATCC BAA-1888 / DSM 6725 / KCTC 15123 / Z-1320) (Anaerocellum thermophilum).